Reading from the N-terminus, the 132-residue chain is PGA2-homolog C27.01c (132 aa).

Residues 17–34 form a helical membrane-spanning segment; sequence WIRIIVYVGGYMLIRPYL. 2 disordered regions span residues 50–90 and 106–132; these read LLEG…DAEF and EYFKNQDKSPLDAYADDDEDIEEHLED. The span at 62–75 shows a compositional bias: basic and acidic residues; that stretch reads EMTHGTKPKEHGEF. Acidic residues predominate over residues 76–87; the sequence is DTDDEEEEENPD. Thr77 bears the Phosphothreonine mark. Residues 106–115 show a composition bias toward basic and acidic residues; the sequence is EYFKNQDKSP. Residues 119-132 are compositionally biased toward acidic residues; the sequence is YADDDEDIEEHLED.

It belongs to the PGA2 family.

It localises to the endoplasmic reticulum membrane. The protein resides in the nucleus membrane. Its function is as follows. Involved processing and trafficking glycosylated proteins. The polypeptide is PGA2-homolog C27.01c (Schizosaccharomyces pombe (strain 972 / ATCC 24843) (Fission yeast)).